The chain runs to 390 residues: Serpin B4 (390 aa).

The residue at position 1 (methionine 1) is an N-acetylmethionine.

It belongs to the serpin family. Ov-serpin subfamily. As to expression, squamous cells.

It is found in the cytoplasm. Functionally, may act as a protease inhibitor to modulate the host immune response against tumor cells. The chain is Serpin B4 (SERPINB4) from Homo sapiens (Human).